The chain runs to 371 residues: Queuine tRNA-ribosyltransferase (371 aa).

Asp90 serves as the catalytic Nucleophile. Catalysis depends on Asp90, which acts as the Proton acceptor. Residues 90–94 (DSGGF), Ser91, Asp144, Gln189, and Gly215 each bind substrate. Residues 246–252 (GVGTPEN) form an RNA binding region. Asp265 functions as the Nucleophile in the catalytic mechanism. The segment at 270 to 274 (TRNAR) is RNA binding; important for wobble base 34 recognition. Residues Cys303, Cys305, Cys308, and His334 each coordinate Zn(2+).

Belongs to the queuine tRNA-ribosyltransferase family. In terms of assembly, homodimer. Within each dimer, one monomer is responsible for RNA recognition and catalysis, while the other monomer binds to the replacement base PreQ1. It depends on Zn(2+) as a cofactor.

The catalysed reaction is 7-aminomethyl-7-carbaguanine + guanosine(34) in tRNA = 7-aminomethyl-7-carbaguanosine(34) in tRNA + guanine. It functions in the pathway tRNA modification; tRNA-queuosine biosynthesis. In terms of biological role, catalyzes the base-exchange of a guanine (G) residue with the queuine precursor 7-aminomethyl-7-deazaguanine (PreQ1) at position 34 (anticodon wobble position) in tRNAs with GU(N) anticodons (tRNA-Asp, -Asn, -His and -Tyr). Catalysis occurs through a double-displacement mechanism. The nucleophile active site attacks the C1' of nucleotide 34 to detach the guanine base from the RNA, forming a covalent enzyme-RNA intermediate. The proton acceptor active site deprotonates the incoming PreQ1, allowing a nucleophilic attack on the C1' of the ribose to form the product. After dissociation, two additional enzymatic reactions on the tRNA convert PreQ1 to queuine (Q), resulting in the hypermodified nucleoside queuosine (7-(((4,5-cis-dihydroxy-2-cyclopenten-1-yl)amino)methyl)-7-deazaguanosine). The sequence is that of Queuine tRNA-ribosyltransferase from Helicobacter pylori (strain ATCC 700392 / 26695) (Campylobacter pylori).